Consider the following 141-residue polypeptide: uncharacterized protein (141 aa).

This is an uncharacterized protein from Methanocaldococcus jannaschii (strain ATCC 43067 / DSM 2661 / JAL-1 / JCM 10045 / NBRC 100440) (Methanococcus jannaschii).